The following is a 294-amino-acid chain: Deubiquitinase OTUD6B (294 aa).

An N-acetylmethionine modification is found at Met1. An OTU domain is found at 148–285 (LEIKQIPSDG…GEHYNSVTRL (138 aa)). Residues 153–159 (IPSDGHC) form a cys-loop region. Asp156 is an active-site residue. Cys159 acts as the Nucleophile in catalysis. Positions 220-230 (IVNTAAWGGQL) are variable-loop. The his-loop stretch occupies residues 268-278 (YMRHAYGLGEH). Residue His278 is part of the active site.

In terms of assembly, interacts with the eukaryotic translation initiation factor 4F complex. In terms of tissue distribution, ubiquitously expressed. Expression is observed in several organ systems including the cardiovascular, digestive, central and peripheral nervous and musculoskeletal systems.

It catalyses the reaction Thiol-dependent hydrolysis of ester, thioester, amide, peptide and isopeptide bonds formed by the C-terminal Gly of ubiquitin (a 76-residue protein attached to proteins as an intracellular targeting signal).. Functionally, deubiquitinating enzyme that may play a role in the ubiquitin-dependent regulation of protein synthesis, downstream of mTORC1. May associate with the protein synthesis initiation complex and modify its ubiquitination to repress translation. May also repress DNA synthesis and modify different cellular targets thereby regulating cell growth and proliferation. May also play a role in proteasome assembly and function. This is Deubiquitinase OTUD6B from Mus musculus (Mouse).